The sequence spans 126 residues: 3-aminoacrylate deaminase RutC (126 aa).

It belongs to the RutC family.

The enzyme catalyses (Z)-3-aminoacrylate + H2O + H(+) = 3-oxopropanoate + NH4(+). In terms of biological role, involved in pyrimidine catabolism. Catalyzes the deamination of 3-aminoacrylate to malonic semialdehyde, a reaction that can also occur spontaneously. RutC may facilitate the reaction and modulate the metabolic fitness, rather than catalyzing essential functions. The chain is 3-aminoacrylate deaminase RutC from Acinetobacter baylyi (strain ATCC 33305 / BD413 / ADP1).